The primary structure comprises 87 residues: Small ribosomal subunit protein bS16c (87 aa).

The protein belongs to the bacterial ribosomal protein bS16 family.

It is found in the plastid. The protein localises to the chloroplast. This chain is Small ribosomal subunit protein bS16c, found in Zygnema circumcarinatum (Green alga).